The primary structure comprises 472 residues: Probable serine/threonine-protein kinase At1g01540 (472 aa).

The helical transmembrane segment at 24 to 44 threads the bilayer; it reads LWVVIGILLGSLIVIALFLLS. Phosphothreonine is present on residues T67 and T143. A Protein kinase domain is found at 154-431; sequence LCEENVIGEG…IHMLEAEDLL (278 aa). Residues 160-168 and K182 contribute to the ATP site; that span reads IGEGGYGIV. Y227 carries the phosphotyrosine modification. The active-site Proton acceptor is D280. Residue S284 is modified to Phosphoserine. Phosphothreonine occurs at positions 314 and 319. Phosphotyrosine is present on Y327. Positions 437 to 449 are enriched in basic and acidic residues; that stretch reads RTTRDHGSRERQE. The interval 437-472 is disordered; the sequence is RTTRDHGSRERQETAVVAAGSESGESGSRHHQQKQR. Over residues 451 to 462 the composition is skewed to low complexity; that stretch reads AVVAAGSESGES.

The protein belongs to the protein kinase superfamily. Ser/Thr protein kinase family.

The protein localises to the membrane. The catalysed reaction is L-seryl-[protein] + ATP = O-phospho-L-seryl-[protein] + ADP + H(+). It carries out the reaction L-threonyl-[protein] + ATP = O-phospho-L-threonyl-[protein] + ADP + H(+). This Arabidopsis thaliana (Mouse-ear cress) protein is Probable serine/threonine-protein kinase At1g01540.